Reading from the N-terminus, the 848-residue chain is Protein SEY1 (848 aa).

Residues 1–733 (MNGNFAAVGS…KRGALGGMTQ (733 aa)) lie on the Cytoplasmic side of the membrane. The region spanning 47-277 (GFNYHLISVF…FVGGVFLPEY (231 aa)) is the GB1/RHD3-type G domain. 57 to 64 (GSQSTGKS) contributes to the GTP binding site. A helical transmembrane segment spans residues 734–754 (VPLYFWIALFAFGWNEIWMVI). The Lumenal segment spans residues 755–757 (RNP). Residues 758-778 (FLFILLLLSAGGTYVAYNLSL) form a helical membrane-spanning segment. Topologically, residues 779–848 (LGPMMQMTNA…KKKDYDDDGI (70 aa)) are cytoplasmic. Residues 815–848 (LAMPASSKSSGGEQVRMDTLDSKGKKKDYDDDGI) are disordered. Basic and acidic residues predominate over residues 829 to 848 (VRMDTLDSKGKKKDYDDDGI).

This sequence belongs to the TRAFAC class dynamin-like GTPase superfamily. GB1/RHD3 GTPase family. RHD3 subfamily.

Its subcellular location is the endoplasmic reticulum membrane. Functionally, cooperates with the reticulon proteins and tubule-shaping DP1 family proteins to generate and maintain the structure of the tubular endoplasmic reticulum network. Has GTPase activity, which is required for its function in ER organization. The chain is Protein SEY1 from Pyricularia oryzae (strain 70-15 / ATCC MYA-4617 / FGSC 8958) (Rice blast fungus).